Reading from the N-terminus, the 335-residue chain is GTPase Obg (335 aa).

The Obg domain maps to 1–158 (MFLDQITIEL…RQVELELKLI (158 aa)). The 176-residue stretch at 159 to 334 (ADIGLVGFPN…LNSLFTNRLS (176 aa)) folds into the OBG-type G domain. Residues 165 to 172 (GFPNAGKS), 190 to 194 (FTTLQ), 215 to 218 (DIPG), 285 to 288 (NKID), and 315 to 317 (SGL) each bind GTP. The Mg(2+) site is built by Ser-172 and Thr-192.

Belongs to the TRAFAC class OBG-HflX-like GTPase superfamily. OBG GTPase family. As to quaternary structure, monomer. Mg(2+) is required as a cofactor.

Its subcellular location is the cytoplasm. Functionally, an essential GTPase which binds GTP, GDP and possibly (p)ppGpp with moderate affinity, with high nucleotide exchange rates and a fairly low GTP hydrolysis rate. Plays a role in control of the cell cycle, stress response, ribosome biogenesis and in those bacteria that undergo differentiation, in morphogenesis control. This Chlamydia caviae (strain ATCC VR-813 / DSM 19441 / 03DC25 / GPIC) (Chlamydophila caviae) protein is GTPase Obg.